Reading from the N-terminus, the 163-residue chain is Phosphopantetheine adenylyltransferase (163 aa).

Substrate is bound at residue Thr-10. Residues 10-11 and His-18 contribute to the ATP site; that span reads TF. The substrate site is built by Lys-42, Leu-75, and Arg-89. Residues 90-92, Glu-100, and 125-131 contribute to the ATP site; these read GVR and YTYVASS.

Belongs to the bacterial CoaD family. As to quaternary structure, homohexamer. Mg(2+) is required as a cofactor.

Its subcellular location is the cytoplasm. The catalysed reaction is (R)-4'-phosphopantetheine + ATP + H(+) = 3'-dephospho-CoA + diphosphate. Its pathway is cofactor biosynthesis; coenzyme A biosynthesis; CoA from (R)-pantothenate: step 4/5. Reversibly transfers an adenylyl group from ATP to 4'-phosphopantetheine, yielding dephospho-CoA (dPCoA) and pyrophosphate. This chain is Phosphopantetheine adenylyltransferase, found in Pelodictyon phaeoclathratiforme (strain DSM 5477 / BU-1).